The sequence spans 74 residues: Protein SspS (74 aa).

Belongs to the alpha/beta-type SASP family.

The chain is Protein SspS (sspS) from Streptococcus pyogenes.